A 255-amino-acid chain; its full sequence is Pimeloyl-[acyl-carrier protein] methyl ester esterase (255 aa).

The region spanning 16-242 is the AB hydrolase-1 domain; it reads LVLLHGWGLN…AAHAPFISHP (227 aa). Substrate is bound by residues W22, 82-83, and 143-147; these read SL and FLALQ. S82 (nucleophile) is an active-site residue. Active-site residues include D207 and H235. A substrate-binding site is contributed by H235.

This sequence belongs to the AB hydrolase superfamily. Carboxylesterase BioH family. As to quaternary structure, monomer.

Its subcellular location is the cytoplasm. The enzyme catalyses 6-carboxyhexanoyl-[ACP] methyl ester + H2O = 6-carboxyhexanoyl-[ACP] + methanol + H(+). The protein operates within cofactor biosynthesis; biotin biosynthesis. In terms of biological role, the physiological role of BioH is to remove the methyl group introduced by BioC when the pimeloyl moiety is complete. It allows to synthesize pimeloyl-ACP via the fatty acid synthetic pathway through the hydrolysis of the ester bonds of pimeloyl-ACP esters. The sequence is that of Pimeloyl-[acyl-carrier protein] methyl ester esterase from Pectobacterium atrosepticum (strain SCRI 1043 / ATCC BAA-672) (Erwinia carotovora subsp. atroseptica).